The primary structure comprises 793 residues: Toll-like receptor 2 type-1 (793 aa).

The first 25 residues, 1–25 (MFNQSKQKPTMKLMWQAWLIYTALA), serve as a signal peptide directing secretion. The Extracellular portion of the chain corresponds to 26–597 (AHLPEEQALR…QLSLMECHRS (572 aa)). Cys-41 and Cys-47 form a disulfide bridge. Asn-48 is a glycosylation site (N-linked (GlcNAc...) asparagine). LRR repeat units lie at residues 64 to 85 (KITV…DLQK), 88 to 109 (NLRT…SFGS), 112 to 133 (KLEL…WFGP), 136 to 157 (SLQH…SPFS), 161 to 182 (NLSS…NFEG), and 185 to 206 (FLNT…SLKS). N-linked (GlcNAc...) asparagine glycosylation is present at Asn-120. Residues Asn-161, Asn-195, Asn-254, and Asn-325 are each glycosylated (N-linked (GlcNAc...) asparagine). A disulfide bond links Cys-362 and Cys-391. LRR repeat units lie at residues 370-391 (SLLY…ETIC), 397-418 (SLQT…ARYI), 423-444 (KLIN…CEWP), 446-467 (NLKY…IPST), 468-486 (LEVL…LQLP), 487-508 (FLKE…TDIP), and 509-530 (NLVA…EFES). A glycan (N-linked (GlcNAc...) asparagine) is linked at Asn-402. The cysteines at positions 441 and 463 are disulfide-linked. Residue Asn-451 is glycosylated (N-linked (GlcNAc...) asparagine). The 55-residue stretch at 542 to 596 (NNFICSCEFLSFIHHEAGIAQVLVGWPESYICDSPLTVRGAQVGSVQLSLMECHR) folds into the LRRCT domain. The helical transmembrane segment at 598–618 (LLVSLICTLVFLFILILVVVG) threads the bilayer. Over 619–793 (YKYHAVWYMR…WENLKAALKS (175 aa)) the chain is Cytoplasmic. One can recognise a TIR domain in the interval 648-791 (ICYDAFVSYS…MFWENLKAAL (144 aa)).

Belongs to the Toll-like receptor family. As to quaternary structure, binds MYD88 (via TIR domain). Post-translationally, N-glycosylated. TLR2-1 is more heavily glycosylated than TLR2-2. In terms of tissue distribution, highly expressed in ovary. Detected at lower levels in heart, lung, gizzard and testis.

The protein resides in the membrane. In terms of biological role, participates in the innate immune response to microbial agents. Acts via MYD88 and TRAF6, leading to NF-kappa-B activation, cytokine secretion and the inflammatory response. Does not respond to LPS and responds with less ability than TLR2-2 to mycoplasmal macrophage-activating lipopeptide-2kD (MALP-2). The sequence is that of Toll-like receptor 2 type-1 (TLR2-1) from Gallus gallus (Chicken).